We begin with the raw amino-acid sequence, 199 residues long: Holliday junction resolvase RecU (199 aa).

Positions 82, 84, 97, and 116 each coordinate Mg(2+).

This sequence belongs to the RecU family. Mg(2+) is required as a cofactor.

Its subcellular location is the cytoplasm. The catalysed reaction is Endonucleolytic cleavage at a junction such as a reciprocal single-stranded crossover between two homologous DNA duplexes (Holliday junction).. In terms of biological role, endonuclease that resolves Holliday junction intermediates in genetic recombination. Cleaves mobile four-strand junctions by introducing symmetrical nicks in paired strands. Promotes annealing of linear ssDNA with homologous dsDNA. Required for DNA repair, homologous recombination and chromosome segregation. The chain is Holliday junction resolvase RecU from Streptococcus pyogenes serotype M1.